The sequence spans 323 residues: NADH-ubiquinone oxidoreductase chain 1 (323 aa).

8 consecutive transmembrane segments (helical) span residues 8-28 (LINPLLYMIPILLAVAFLTLI), 75-95 (MFLIAPTMALALAMSIWAPLP), 105-125 (LGILFILALSSLAVYTILGSG), 151-171 (LGLILLCMIMLAGGFTYTTLM), 177-197 (MWLIIPGWPMAAMWYISTLAE), 234-254 (ANILMMNTLSYLILFLGSSFM), 258-278 (ELTTISLMIKSSILSMIFLWV), and 298-318 (FLPITLAMTLWHISLPISMLG).

It belongs to the complex I subunit 1 family. Core subunit of respiratory chain NADH dehydrogenase (Complex I) which is composed of 45 different subunits.

The protein resides in the mitochondrion inner membrane. It catalyses the reaction a ubiquinone + NADH + 5 H(+)(in) = a ubiquinol + NAD(+) + 4 H(+)(out). In terms of biological role, core subunit of the mitochondrial membrane respiratory chain NADH dehydrogenase (Complex I) which catalyzes electron transfer from NADH through the respiratory chain, using ubiquinone as an electron acceptor. Essential for the catalytic activity and assembly of complex I. The chain is NADH-ubiquinone oxidoreductase chain 1 (mt-nd1) from Xenopus laevis (African clawed frog).